The chain runs to 266 residues: MLMSKLADVFKNHKVFIPFIVADDPDFETTVKNVVALAKGGADIVELGIPFSDPVADGPVIQAADLRAFAANVRTKTVFDIVEAARKETAVPIVFLTYLNIVFKYGYDAFLKRCADLNVAGLVIPDLPYESRDEIVPIAEKYGIDIIPLITPTSGHRIEKIAKSASGFIYVVSSMGITGERDEFFAGLKALVAEIKQYTNVPTAIGFGIHTPEQAQTMAGIADGVIIGSAIVDLVAKEKQQAPAAIEKFTKQIRVAVDAKKQISVK.

Catalysis depends on proton acceptor residues Glu46 and Asp57.

It belongs to the TrpA family. In terms of assembly, tetramer of two alpha and two beta chains.

It carries out the reaction (1S,2R)-1-C-(indol-3-yl)glycerol 3-phosphate + L-serine = D-glyceraldehyde 3-phosphate + L-tryptophan + H2O. It participates in amino-acid biosynthesis; L-tryptophan biosynthesis; L-tryptophan from chorismate: step 5/5. Its function is as follows. The alpha subunit is responsible for the aldol cleavage of indoleglycerol phosphate to indole and glyceraldehyde 3-phosphate. In Lacticaseibacillus casei (Lactobacillus casei), this protein is Tryptophan synthase alpha chain.